The following is a 590-amino-acid chain: Arginine--tRNA ligase, cytoplasmic (590 aa).

N-acetylalanine is present on Ala2. Residues 137–139 (SPN), His148, Tyr322, Asp326, and Gln350 each bind L-arginine. The short motif at 138 to 149 (PNIAKEMHVGHL) is the 'HIGH' region element. Positions 470–484 (DTAVYLLYAHARICS) are interaction with tRNA.

It belongs to the class-I aminoacyl-tRNA synthetase family.

The protein resides in the cytoplasm. The protein localises to the cytosol. The catalysed reaction is tRNA(Arg) + L-arginine + ATP = L-arginyl-tRNA(Arg) + AMP + diphosphate. Functionally, forms part of a macromolecular complex that catalyzes the attachment of specific amino acids to cognate tRNAs during protein synthesis. This chain is Arginine--tRNA ligase, cytoplasmic, found in Arabidopsis thaliana (Mouse-ear cress).